The chain runs to 883 residues: Aldehyde-alcohol dehydrogenase (883 aa).

The aldehyde dehydrogenase stretch occupies residues 13–456 (KLVAEKHVDE…DNVSAINLLN (444 aa)). NAD(+) is bound by residues 121–126 (ITPTTN), Gly-206, and Gly-224. The Nucleophile role is filled by Cys-257. Residues Glu-355, Leu-435, and 438–443 (GSYGRN) contribute to the NAD(+) site. Residues 457–464 (IKKVGRRR) form a linker region. NAD(+) is bound by residues Asp-500, Asp-534, 561 to 565 (GSPMD), 612 to 613 (TT), Val-625, Lys-634, and Leu-653. 4 residues coordinate Fe cation: Asp-668, His-672, His-736, and His-750.

The protein in the N-terminal section; belongs to the aldehyde dehydrogenase family. It in the C-terminal section; belongs to the iron-containing alcohol dehydrogenase family. It depends on Fe(2+) as a cofactor.

It carries out the reaction ethanol + NAD(+) = acetaldehyde + NADH + H(+). It catalyses the reaction an aldehyde + NAD(+) + H2O = a carboxylate + NADH + 2 H(+). In terms of biological role, has alcohol dehydrogenase activity. Has aldehyde dehydrogenase activity. May play a role in enhancing virulence in mice. May be considered a potential virulence factor. The chain is Aldehyde-alcohol dehydrogenase from Streptococcus pneumoniae serotype 4 (strain ATCC BAA-334 / TIGR4).